Here is a 314-residue protein sequence, read N- to C-terminus: GTPase Era (314 aa).

The Era-type G domain occupies 21-189 (KSGFVGIIGR…QNTLIEQLEP (169 aa)). Positions 29–36 (GRPNVGKS) are G1. A GTP-binding site is contributed by 29 to 36 (GRPNVGKS). A G2 region spans residues 55–59 (QTTRN). The G3 stretch occupies residues 76–79 (DTPG). GTP-binding positions include 76 to 80 (DTPGI) and 138 to 141 (NKSD). The interval 138–141 (NKSD) is G4. The segment at 168 to 170 (FSA) is G5. Residues 212-296 (IREQILQLTR…FLKLFVKVEP (85 aa)) enclose the KH type-2 domain.

The protein belongs to the TRAFAC class TrmE-Era-EngA-EngB-Septin-like GTPase superfamily. Era GTPase family. In terms of assembly, monomer.

It localises to the cytoplasm. It is found in the cell inner membrane. Functionally, an essential GTPase that binds both GDP and GTP, with rapid nucleotide exchange. Plays a role in 16S rRNA processing and 30S ribosomal subunit biogenesis and possibly also in cell cycle regulation and energy metabolism. In Crocosphaera subtropica (strain ATCC 51142 / BH68) (Cyanothece sp. (strain ATCC 51142)), this protein is GTPase Era.